Here is a 354-residue protein sequence, read N- to C-terminus: Threonine synthase (354 aa).

Lysine 61 is subject to N6-(pyridoxal phosphate)lysine. Residues asparagine 87, 187–191 (GNAGN), and threonine 316 contribute to the pyridoxal 5'-phosphate site.

Belongs to the threonine synthase family. The cofactor is pyridoxal 5'-phosphate.

The catalysed reaction is O-phospho-L-homoserine + H2O = L-threonine + phosphate. Its pathway is amino-acid biosynthesis; L-threonine biosynthesis; L-threonine from L-aspartate: step 5/5. In terms of biological role, catalyzes the gamma-elimination of phosphate from L-phosphohomoserine and the beta-addition of water to produce L-threonine. The protein is Threonine synthase (thrC) of Halalkalibacterium halodurans (strain ATCC BAA-125 / DSM 18197 / FERM 7344 / JCM 9153 / C-125) (Bacillus halodurans).